The primary structure comprises 383 residues: U-box domain-containing protein 63 (383 aa).

Positions 166-186 are disordered; that stretch reads PDGNVSNSHRNTQQKRDFASV. Positions 201–273 constitute a U-box domain; it reads SLKAILSDPV…HAFRQEEDSD (73 aa).

It catalyses the reaction S-ubiquitinyl-[E2 ubiquitin-conjugating enzyme]-L-cysteine + [acceptor protein]-L-lysine = [E2 ubiquitin-conjugating enzyme]-L-cysteine + N(6)-ubiquitinyl-[acceptor protein]-L-lysine.. Its pathway is protein modification; protein ubiquitination. Functionally, functions as an E3 ubiquitin ligase. This chain is U-box domain-containing protein 63 (PUB63), found in Arabidopsis thaliana (Mouse-ear cress).